Reading from the N-terminus, the 758-residue chain is 5-methyltetrahydropteroyltriglutamate--homocysteine methyltransferase (758 aa).

5-methyltetrahydropteroyltri-L-glutamate-binding positions include 17–20 (RELK) and lysine 117. L-homocysteine is bound by residues 434 to 436 (IGS) and glutamate 487. L-methionine is bound by residues 434 to 436 (IGS) and glutamate 487. 5-methyltetrahydropteroyltri-L-glutamate-binding positions include 518-519 (RC) and tryptophan 564. Position 602 (aspartate 602) interacts with L-homocysteine. Aspartate 602 serves as a coordination point for L-methionine. Glutamate 608 contacts 5-methyltetrahydropteroyltri-L-glutamate. Zn(2+)-binding residues include histidine 644, cysteine 646, and glutamate 668. The Proton donor role is filled by histidine 697. Cysteine 729 is a Zn(2+) binding site.

The protein belongs to the vitamin-B12 independent methionine synthase family. Zn(2+) serves as cofactor.

It carries out the reaction 5-methyltetrahydropteroyltri-L-glutamate + L-homocysteine = tetrahydropteroyltri-L-glutamate + L-methionine. The protein operates within amino-acid biosynthesis; L-methionine biosynthesis via de novo pathway; L-methionine from L-homocysteine (MetE route): step 1/1. Its function is as follows. Catalyzes the transfer of a methyl group from 5-methyltetrahydrofolate to homocysteine resulting in methionine formation. This Photorhabdus laumondii subsp. laumondii (strain DSM 15139 / CIP 105565 / TT01) (Photorhabdus luminescens subsp. laumondii) protein is 5-methyltetrahydropteroyltriglutamate--homocysteine methyltransferase.